The chain runs to 3483 residues: Nonribosomal peptide synthetase Ao415 (3483 aa).

Positions 281-669 are adenylation 1; it reads TFKKLNETSN…DVHPLIKDVV (389 aa). Residues 775-851 form the Carrier 1 domain; sequence EVFDELSTKI…GLRDHVSGKK (77 aa). Ser812 is modified (O-(pantetheine 4'-phosphoryl)serine). The tract at residues 886–1297 is condensation 1; the sequence is ANVLPCSPMQ…YCLLHMLQNQ (412 aa). Positions 1363–1758 are adenylation 2; the sequence is TYRQFDDMGN…SADKDVAEIV (396 aa). A Carrier 2 domain is found at 1865 to 1941; it reads EELSETEKVI…SLAKALSSAN (77 aa). Ser1901 carries the post-translational modification O-(pantetheine 4'-phosphoryl)serine. Positions 1981–2379 are condensation 2; that stretch reads IKPCTPLQEG…LLKNPEQEVA (399 aa). The Carrier 3 domain maps to 2412 to 2485; it reads TEAAVSIRRE…RMVVYLSSTK (74 aa). Ser2446 is modified (O-(pantetheine 4'-phosphoryl)serine). The segment at 2520-2917 is condensation 3; the sequence is ESILPTTPLQ…MLQKIIGNPL (398 aa). One can recognise a Carrier 4 domain in the interval 2954–3030; sequence DNYQNLERQV…KICLFLDKKQ (77 aa). The residue at position 2991 (Ser2991) is an O-(pantetheine 4'-phosphoryl)serine. The segment at 3084-3368 is condensation 4; it reads SEGRIFLPTF…VQEDLLKIST (285 aa).

This sequence belongs to the NRP synthetase family.

It functions in the pathway siderophore biosynthesis. Nonribosomal peptide synthetase; part of the gene cluster that mediates the biosynthesis of desferriferrichrome that chelates Fe(3+) to form ferrichrome. Fe(3+) is a key factor for induction of trap formation and the fungus uses the iron chelating desferriferrichrome to sequester Fe(3+) to inhibit trap formation and increase nematicidal activity. The biosynthesis of desferriferrichrome requires the action of the L-ornithine N(5)-oxygenase (LOO) Ao414 that hydroxylates L-ornithine at N(5), resulting in the formation of N(5)-hydroxyl-L-ornithine, which is subsequently N-acetylated to yield N(5)-acetyl-N(5)-hydroxy-L-ornithine (L-AHO). L-AHO harbors one hydroxamate moiety, which is the key core responsible for chelating iron. Then, L-AHO is further condensated with glycines to form desferriferrichrome through the NRPS protein Ao415. In Arthrobotrys oligospora (strain ATCC 24927 / CBS 115.81 / DSM 1491) (Nematode-trapping fungus), this protein is Nonribosomal peptide synthetase Ao415.